A 622-amino-acid chain; its full sequence is Basal cell adhesion molecule (622 aa).

Residues 1–25 (MEPPDARAGLLWLTFLLSGYSGAQA) form the signal peptide. Ig-like V-type domains are found at residues 26–135 (ELHV…SSVR) and 140–250 (PEDT…HTFR). At 26–541 (ELHVSVPPRV…GSVAPQTAQA (516 aa)) the chain is on the extracellular side. Cystine bridges form between Cys47–Cys118, Cys165–Cys230, and Cys284–Cys330. 3 consecutive Ig-like C2-type domains span residues 267 to 342 (PSTT…EEVQ), 356 to 435 (PLEL…QSFQ), and 442 to 532 (PELK…FHFG). Residues Asn314, Asn323, Asn370, and Asn377 are each glycosylated (N-linked (GlcNAc...) asparagine). Disulfide bonds link Cys378-Cys418 and Cys467-Cys516. A helical membrane pass occupies residues 542-562 (GVAVMAVAVSVGLLLLVVAAF). The Cytoplasmic portion of the chain corresponds to 563 to 622 (YCMRRKGRPGCCRRAEKGAPPAREPELSHSGSERPEHTGLLMGGPSGGGRGGSGGFGDEC). Residues 574–622 (CRRAEKGAPPAREPELSHSGSERPEHTGLLMGGPSGGGRGGSGGFGDEC) form a disordered region. Residues 575-599 (RRAEKGAPPAREPELSHSGSERPEH) are compositionally biased toward basic and acidic residues. Phosphoserine occurs at positions 590, 592, 594, and 615. Positions 603–622 (LMGGPSGGGRGGSGGFGDEC) are enriched in gly residues.

In terms of assembly, homodimer. Interacts with ITGA4:ITGB1. Interacts with spectrins SPTA1 and SPTB1. Epinephrine-stimulated phosphorylation of Ser-615 by PKA enhances adhesion to laminin. Ser-615 can also be phosphorylated by AKT1.

Its subcellular location is the cell membrane. Its function is as follows. Transmembrane glycoprotein that functions as both a receptor and an adhesion molecule playing a crucial role in cell adhesion, motility, migration and invasion. Extracellular domain enables binding to extracellular matrix proteins, such as laminin, integrin and other ligands while its intracellular domain interacts with cytoskeletal proteins like hemoglobin, facilitating cell signal transduction. Serves as a receptor for laminin alpha-5/LAMA5 to promote cell adhesion. Mechanistically, JAK2 induces BCAM phosphorylation and activates its adhesion to laminin by stimulating a Rap1/AKT signaling pathway in the absence of EPOR. The chain is Basal cell adhesion molecule (Bcam) from Mus musculus (Mouse).